The sequence spans 65 residues: Weak neurotoxin 6 (65 aa).

5 disulfides stabilise this stretch: cysteine 3–cysteine 24, cysteine 6–cysteine 11, cysteine 17–cysteine 42, cysteine 46–cysteine 57, and cysteine 58–cysteine 63.

This sequence belongs to the three-finger toxin family. Ancestral subfamily. Orphan group II sub-subfamily. Expressed by the venom gland.

The protein resides in the secreted. Functionally, binds with low affinity to muscular (alpha-1-beta-1-delta-epsilon/CHRNA1-CHRNB1-CHRND-CHRNE) and very low affinity to neuronal (alpha-7/CHRNA7) nicotinic acetylcholine receptor (nAChR). The chain is Weak neurotoxin 6 from Naja naja (Indian cobra).